Here is a 287-residue protein sequence, read N- to C-terminus: GDT1-like protein C17G8.08c (287 aa).

7 consecutive transmembrane segments (helical) span residues 7–27 (WAIIAVLLSTVVAKKIVGEGM), 50–70 (LIFSISMIFGCEIGDKTFIVA), 89–109 (ALFIMTLLGVLLGHAAPLLFP), 112–132 (LTDILGGVLFVIFGIKMLMEA), 194–214 (VMATLFSPLFIKAFALTFVSE), 232–252 (VYGVFMGANVGHACCTALAVI), and 267–287 (MFIGGILFIAFGLVYFYQGFF).

The protein belongs to the GDT1 family.

It is found in the membrane. The chain is GDT1-like protein C17G8.08c from Schizosaccharomyces pombe (strain 972 / ATCC 24843) (Fission yeast).